A 167-amino-acid polypeptide reads, in one-letter code: Pathogenesis-related protein PRMS (167 aa).

Positions 1–27 (MEASNKLAVLLLWLVMAAATAVHPSYS) are cleaved as a signal peptide. One can recognise an SCP domain in the interval 37 to 155 (PQNSARAAVG…NRGVFIICNY (119 aa)). 3 disulfide bridges follow: C71-C143, C116-C122, and C138-C153.

The protein belongs to the CRISP family.

Functionally, probably involved in the defense reaction of plants against pathogens. In Zea mays (Maize), this protein is Pathogenesis-related protein PRMS (PRMS).